The sequence spans 199 residues: Probable thymidylate kinase (199 aa).

9 to 16 contributes to the ATP binding site; that stretch reads GIDGCGKT.

The protein belongs to the thymidylate kinase family.

The enzyme catalyses dTMP + ATP = dTDP + ADP. The chain is Probable thymidylate kinase from Methanococcus maripaludis (strain DSM 14266 / JCM 13030 / NBRC 101832 / S2 / LL).